The primary structure comprises 560 residues: IQ motif and ankyrin repeat domain-containing protein 1 (560 aa).

The interval 1–72 is disordered; that stretch reads MDSKKGRPKA…DRAARAIQGA (72 aa). One can recognise an IQ domain in the interval 62–91; the sequence is EDRAARAIQGAFRQLRARRELARRREERRE. ANK repeat units lie at residues 191–223 and 224–253; these read YGNT…SKGA and FGPT…DPRV. A coiled-coil region spans residues 281-398; sequence LTEAMLQNME…RLELREQTQE (118 aa).

This is IQ motif and ankyrin repeat domain-containing protein 1 from Homo sapiens (Human).